The sequence spans 337 residues: Holliday junction branch migration complex subunit RuvB (337 aa).

The interval 1–179 (MTHQVSVLHQ…FSFTGRMSYY (179 aa)) is large ATPase domain (RuvB-L). Residues Leu18, Arg19, Gly60, Lys63, Thr64, Ser65, 126 to 128 (EDY), Arg169, Tyr179, and Arg216 contribute to the ATP site. Thr64 serves as a coordination point for Mg(2+). The tract at residues 180-250 (SDEDLTTILK…VAEKALAMLL (71 aa)) is small ATPAse domain (RuvB-S). The head domain (RuvB-H) stretch occupies residues 253-337 (DWGLNEIDIK…DNLQSLGEEK (85 aa)). The DNA site is built by Lys308 and Arg313.

It belongs to the RuvB family. In terms of assembly, homohexamer. Forms an RuvA(8)-RuvB(12)-Holliday junction (HJ) complex. HJ DNA is sandwiched between 2 RuvA tetramers; dsDNA enters through RuvA and exits via RuvB. An RuvB hexamer assembles on each DNA strand where it exits the tetramer. Each RuvB hexamer is contacted by two RuvA subunits (via domain III) on 2 adjacent RuvB subunits; this complex drives branch migration. In the full resolvosome a probable DNA-RuvA(4)-RuvB(12)-RuvC(2) complex forms which resolves the HJ.

It is found in the cytoplasm. It catalyses the reaction ATP + H2O = ADP + phosphate + H(+). The RuvA-RuvB-RuvC complex processes Holliday junction (HJ) DNA during genetic recombination and DNA repair, while the RuvA-RuvB complex plays an important role in the rescue of blocked DNA replication forks via replication fork reversal (RFR). RuvA specifically binds to HJ cruciform DNA, conferring on it an open structure. The RuvB hexamer acts as an ATP-dependent pump, pulling dsDNA into and through the RuvAB complex. RuvB forms 2 homohexamers on either side of HJ DNA bound by 1 or 2 RuvA tetramers; 4 subunits per hexamer contact DNA at a time. Coordinated motions by a converter formed by DNA-disengaged RuvB subunits stimulates ATP hydrolysis and nucleotide exchange. Immobilization of the converter enables RuvB to convert the ATP-contained energy into a lever motion, pulling 2 nucleotides of DNA out of the RuvA tetramer per ATP hydrolyzed, thus driving DNA branch migration. The RuvB motors rotate together with the DNA substrate, which together with the progressing nucleotide cycle form the mechanistic basis for DNA recombination by continuous HJ branch migration. Branch migration allows RuvC to scan DNA until it finds its consensus sequence, where it cleaves and resolves cruciform DNA. In Chlamydia caviae (strain ATCC VR-813 / DSM 19441 / 03DC25 / GPIC) (Chlamydophila caviae), this protein is Holliday junction branch migration complex subunit RuvB.